The sequence spans 693 residues: Adhesion G-protein coupled receptor G1 (693 aa).

A signal peptide spans 1-25 (MTPQSLLQTTLFLLSLLFLVQGAHG). 26–33 (RGHREDFR) serves as a coordination point for heparin. Over 26–401 (RGHREDFRFC…SVEVDAVHKH (376 aa)) the chain is Extracellular. Disulfide bonds link Cys35–Cys91 and Cys121–Cys177. N-linked (GlcNAc...) asparagine glycans are attached at residues Asn39, Asn148, and Asn171. 190–200 (LKHPQKASRRP) contacts heparin. The 172-residue stretch at 224–395 (DMVSFEEDRI…AVLMVSSVEV (172 aa)) folds into the GAIN-B domain. N-linked (GlcNAc...) asparagine glycans are attached at residues Asn234, Asn303, Asn324, and Asn341. 2 cysteine pairs are disulfide-bonded: Cys346–Cys377 and Cys366–Cys379. The GPS stretch occupies residues 346–395 (CVFWVEDPTLSSPGHWSSAGCETVRRETQTSCFCNHLTYFAVLMVSSVEV). The segment at 384–397 (YFAVLMVSSVEVDA) is stachel. A helical membrane pass occupies residues 402 to 424 (YLSLLSYVGCVVSALACLVTIAA). Residues 425–437 (YLCSRVPLPCRRK) lie on the Cytoplasmic side of the membrane. The helical transmembrane segment at 438–460 (PRDYTIKVHMNLLLAVFLLDTSF) threads the bilayer. Topologically, residues 461 to 465 (LLSEP) are extracellular. The chain crosses the membrane as a helical span at residues 466 to 495 (VALTGSEAGCRASAIFLHFSLLTCLSWMGL). Cys475 and Cys562 are joined by a disulfide. Residues 496 to 510 (EGYNLYRLVVEVFGT) lie on the Cytoplasmic side of the membrane. A helical membrane pass occupies residues 511–533 (YVPGYLLKLSAMGWGFPIFLVTL). Residues 534–562 (VALVDVDNYGPIILAVHRTPEGVIYPSMC) are Extracellular-facing. Residues 563–588 (WIRDSLVSYITNLGLFSLVFLFNMAM) traverse the membrane as a helical segment. Residues 589-602 (LATMVVQILRLRPH) lie on the Cytoplasmic side of the membrane. A helical membrane pass occupies residues 603 to 624 (TQKWSHVLTLLGLSLVLGLPWA). The Extracellular portion of the chain corresponds to 625–628 (LIFF). The helical transmembrane segment at 629–654 (SFASGTFQLVVLYLFSIITSFQGFLI) threads the bilayer. Residues 655-693 (FIWYWSMRLQARGGPSPLKSNSDSARLPISSGSTSSSRI) are Cytoplasmic-facing. Residues 670-693 (SPLKSNSDSARLPISSGSTSSSRI) form a disordered region. The segment covering 684–693 (SSGSTSSSRI) has biased composition (low complexity).

It belongs to the G-protein coupled receptor 2 family. LN-TM7 subfamily. As to quaternary structure, heterodimer of 2 chains generated by proteolytic processing; the large extracellular N-terminal fragment (ADGRG1 NT) and the membrane-bound C-terminal fragment (ADGRG1-CT) predominantly remain associated and non-covalently linked. ADGRG1 NT self-associates in a trans-trans manner; the homophilic interaction enhances receptor signaling. Interacts with TGM2. Interacts with heparin; leading to the reduction of ADGRG1 shedding. Interacts with COL3A1. Part of a GPCR-tetraspanin complex at least consisting of ADGRG1, CD81, eventually CD9, and GNA11 in which CD81 is enhancing the association of ADGRG1 with GNA11. In terms of processing, autoproteolytically cleaved into 2 fragments; the large extracellular N-terminal fragment (ADGRG1 NT) and the membrane-bound C-terminal fragment (ADGRG1 CT) predominantly remain associated and non-covalently linked. Shedding to yield the secreted ADGRG1 N-terminal fragment seems to involve metalloprotease(s). Post-translationally, N-glycosylated. Contains sialic acid residues. Ubiquitinated. Undergoes polyubiquitination upon activation. As to expression, widely distributed with highest levels found in thyroid gland, brain and heart. Expressed in a great number of tumor cells. Expression is down-regulated in different tumors from highly metastatic cells.

It localises to the cell membrane. It is found in the secreted. The protein localises to the membrane raft. Forms a heterodimer of 2 chains generated by proteolytic processing that remain associated through non-covalent interactions mediated by the GAIN-B domain. In the inactivated receptor, the Stachel sequence (also named stalk) is embedded in the GAIN-B domain, where it adopts a beta-strand conformation. On activation, the Stachel moves into the 7 transmembrane region and adopts a twisted hook-shaped configuration that forms contacts within the receptor, leading to coupling of a G-alpha protein, which activates signaling. The cleaved GAIN-B and N-terminal domains can then dissociate from the rest of the receptor. Its function is as follows. Adhesion G-protein coupled receptor (aGPCR) for steroid hormone 17alpha-hydroxypregnenolone (17-OH), which is involved in cell adhesion and cell-cell interactions. Ligand binding causes a conformation change that triggers signaling via guanine nucleotide-binding proteins (G proteins) and modulates the activity of downstream effectors, such as RhoA pathway. ADGRG1 is coupled to G(12) and/or G(13) G proteins (GNA12 and GNA13, respectively) and mediates the activation Rho small GTPases. Acts as a potent suppressor of ferroptosis: binding to 17-OH-binding initiates signaling that down-regulates CD36 and alleviates ferroptosis-induced liver injury. Ligand-binding also induces cell adhesion activity via association with proteins such as collagen III/COL3A1 and TGM2. Mediates cell matrix adhesion in developing neurons and hematopoietic stem cells. Involved in cortical development, specifically in maintenance of the pial basement membrane integrity and in cortical lamination: association with COL3A1 in the developing brain inhibits neuronal migration via activation of the RhoA pathway. Together with TGM2, acts as a regulator of myelination and myelin repair in oligodendrocyte precursor cells. Acts as a hemostatic sensor of shear force: G protein-coupled receptor signaling is activated in response to shear force in platelets, promoting G(13) G protein signaling, and platelet shape change and aggregation in a COL3A1-dependent manner. Acts as an inhibitor of VEGFA production thereby inhibiting angiogenesis through a signaling pathway mediated by PRKCA. Plays a role in the maintenance of hematopoietic stem cells in bone marrow niche. Plays an essential role in testis development. This chain is Adhesion G-protein coupled receptor G1, found in Homo sapiens (Human).